The sequence spans 481 residues: Glutamate mutase epsilon subunit (481 aa).

Residue R67 participates in L-glutamate binding. Residue G69 coordinates adenosylcob(III)alamin. Position 99 (R99) interacts with L-glutamate. N122 lines the adenosylcob(III)alamin pocket. L-glutamate contacts are provided by residues 148–149 (RH), E170, and Y176. P179 is an adenosylcob(III)alamin binding site. Y180 is an L-glutamate binding site. Adenosylcob(III)alamin-binding residues include F296, K325, E329, and I333.

This sequence belongs to the methylaspartate mutase GlmE subunit family. As to quaternary structure, heterotetramer composed of 2 epsilon subunits (GlmE) and 2 sigma subunits (GlmS). GlmE exists as a homodimer and GlmS as a monomer. Requires adenosylcob(III)alamin as cofactor.

The catalysed reaction is (2S,3S)-3-methyl-L-aspartate = L-glutamate. It participates in amino-acid degradation; L-glutamate degradation via mesaconate pathway; acetate and pyruvate from L-glutamate: step 1/4. Catalyzes the carbon skeleton rearrangement of L-glutamate to L-threo-3-methylaspartate ((2S,3S)-3-methylaspartate). This chain is Glutamate mutase epsilon subunit, found in Yersinia enterocolitica serotype O:8 / biotype 1B (strain NCTC 13174 / 8081).